The following is a 505-amino-acid chain: 4-alpha-glucanotransferase (505 aa).

It belongs to the disproportionating enzyme family.

The protein localises to the cytoplasm. It catalyses the reaction Transfers a segment of a (1-&gt;4)-alpha-D-glucan to a new position in an acceptor, which may be glucose or a (1-&gt;4)-alpha-D-glucan.. The sequence is that of 4-alpha-glucanotransferase (malQ) from Streptococcus pneumoniae serotype 4 (strain ATCC BAA-334 / TIGR4).